A 287-amino-acid polypeptide reads, in one-letter code: Elongation factor Ts (287 aa).

The interval 80–83 (TDFL) is involved in Mg(2+) ion dislocation from EF-Tu.

It belongs to the EF-Ts family.

It localises to the cytoplasm. In terms of biological role, associates with the EF-Tu.GDP complex and induces the exchange of GDP to GTP. It remains bound to the aminoacyl-tRNA.EF-Tu.GTP complex up to the GTP hydrolysis stage on the ribosome. The sequence is that of Elongation factor Ts from Pseudomonas syringae pv. syringae (strain B728a).